The sequence spans 518 residues: Reduced folate transporter (518 aa).

M1 bears the N-acetylmethionine mark. Residues 1–29 (MVPTGQVAEKQACEEPRQDRELKSWRCLV) lie on the Cytoplasmic side of the membrane. A helical membrane pass occupies residues 30-50 (FYLCFFGFMAQLRPGESFITP). Folate contacts are provided by I48 and T49. The Extracellular portion of the chain corresponds to 51-62 (YLLQQNFTIEQV). N56 is a glycosylation site (N-linked (GlcNAc...) asparagine). Residues 63 to 85 (TNEIIPVLPYSHLAVLVPIFLLT) traverse the membrane as a helical segment. At 86-89 (DYLR) the chain is on the cytoplasmic side. The helical transmembrane segment at 90–110 (YKPILILQCLSFMCVWLLLLL) threads the bilayer. The Extracellular portion of the chain corresponds to 111–114 (GTSV). A helical transmembrane segment spans residues 115–137 (VHMQLMEVFYSVTMAARIAYSSY). Residues E121 and R131 each coordinate folate. Topologically, residues 138–151 (IFSLVRPSRYQRMA) are cytoplasmic. The chain crosses the membrane as a helical span at residues 152 to 176 (SYSRAAVLLGVFTSSVLGQVLWPLE). Position 162 (V162) interacts with folate. Residues 177 to 181 (QKSQN) lie on the Extracellular side of the membrane. Residues 182 to 200 (SNMLNYISLGFIIFSLGLS) traverse the membrane as a helical segment. The Cytoplasmic segment spans residues 201-266 (LFLKRPKHSL…LSELVGNLRQ (66 aa)). The helical transmembrane segment at 267-292 (PQLRLWCLWWVFNSAGYYLIVYYVHV) threads the bilayer. Folate is bound by residues A281, G282, and I286. Topologically, residues 293–300 (LWSIDKNL) are extracellular. Residues 301 to 323 (NYNGAVDAASTLLSAITSFSAGF) traverse the membrane as a helical segment. Topologically, residues 324–329 (VKIRWA) are cytoplasmic. The helical transmembrane segment at 330–350 (LWSKLVIASVIAIQAGLVFCM) threads the bilayer. Topologically, residues 351-353 (YMV) are extracellular. A helical transmembrane segment spans residues 354 to 377 (HYVTWVHKIWVLYMTYVLFRGAYQ). Residues Y366 and V370 each contribute to the folate site. Residues 378 to 391 (FLVPIATFQIASSL) are Cytoplasmic-facing. Residues 392–415 (SKELCALVFGINTFLATALKTAIT) form a helical membrane-spanning segment. The interval 407–419 (ATALKTAITLVVS) is required for substrate-binding. The Extracellular segment spans residues 416-423 (LVVSDKRG). Residues 424-448 (LGLKVEKQFCIYSVYFMVLSVICFV) form a helical membrane-spanning segment. Over 449–512 (GAVLDGVRYC…DGVEDSEASL (64 aa)) the chain is Cytoplasmic. A phosphoserine mark is found at S473, S478, and S483. Positions 480–518 (QVPSMQDGGLGGLQPSAPQLLPEDGVEDSEASLRAEAKA) are disordered.

This sequence belongs to the reduced folate carrier (RFC) transporter (TC 2.A.48) family.

It localises to the cell membrane. It is found in the apical cell membrane. The protein localises to the basolateral cell membrane. It catalyses the reaction 5-amino-1-(5-phospho-beta-D-ribosyl)imidazole-4-carboxamide(in) + (6S)-5-methyl-5,6,7,8-tetrahydrofolate(out) = 5-amino-1-(5-phospho-beta-D-ribosyl)imidazole-4-carboxamide(out) + (6S)-5-methyl-5,6,7,8-tetrahydrofolate(in). Functionally, antiporter that mediates the import of reduced folates, driven by the export of organic anions. Also acts as an importer of immunoreactive cyclic dinucleotides, but with a lower transporter activity. Mechanistically, acts as a secondary active transporter, which exports intracellular organic anions down their concentration gradients to facilitate the uptake of its substrates. Has high affinity for N5-methyltetrahydrofolate, the predominant circulating form of folate. Also mediates the import of antifolate drug methotrexate. 5-amino-4-imidazolecarboxamide riboside (AICAR), when phosphorylated to AICAR monophosphate, can serve as an organic anion for antiporter activity. This Cricetulus griseus (Chinese hamster) protein is Reduced folate transporter.